Here is a 607-residue protein sequence, read N- to C-terminus: F-box protein At-B (607 aa).

The F-box domain maps to 9 to 47 (LAEEILKRLDLENLCSVACVSTTLRSAVVSGVLPSLTSL). LRR repeat units lie at residues 51–76 (VFSP…TLNC), 77–99 (LRLN…HLLR), 100–125 (CSLL…TLEM), 130–155 (SPDV…QLNI), 228–253 (LDLI…DLED), 262–286 (DNDL…SLVR), 295–320 (FKRI…RLGG), 321–346 (FPKV…EVRG), 347–372 (AFLL…RLST), 373–397 (CPLI…DLGS), 398–422 (CKSI…NLAG), 424–447 (DVTD…SLRG), 448–477 (CRRV…DLGH), 478–503 (MPGI…SIRS), 504–536 (CFHV…NVHN), and 537–563 (CVSL…GMGQ).

This is F-box protein At-B (ATB) from Arabidopsis thaliana (Mouse-ear cress).